Consider the following 688-residue polypeptide: Glycine--tRNA ligase beta subunit (688 aa).

Belongs to the class-II aminoacyl-tRNA synthetase family. In terms of assembly, tetramer of two alpha and two beta subunits.

Its subcellular location is the cytoplasm. It carries out the reaction tRNA(Gly) + glycine + ATP = glycyl-tRNA(Gly) + AMP + diphosphate. The protein is Glycine--tRNA ligase beta subunit of Haemophilus influenzae (strain PittEE).